Consider the following 106-residue polypeptide: RxLR effector protein PSR1 (106 aa).

The first 20 residues, 1–20, serve as a signal peptide directing secretion; that stretch reads MRLTYVLLVAVTTLLVSCDA. The RxLR-dEER signature appears at 33 to 46; that stretch reads RLLRFVEAADEEER. The tract at residues 50–106 is WY domain; sequence FSPEKLRKMLGDETYRLKKFGKWDSDGHTFDGLKHYLLLSDSSMVKLRNMYKAWLEQ. Positions 56–69 match the Bipartite nuclear localization signal (NLS) motif; sequence RKMLGDETYRLKKF.

It belongs to the RxLR effector family. As to quaternary structure, interacts with host PINP1.

The protein resides in the secreted. It localises to the host nucleus. Its function is as follows. Secreted effector that possesses RNA silencing suppression activity by inhibiting the biogenesis of small RNAs in the host plant to promote enhanced susceptibility of host to the pathogen during infection. Interferes with secondary siRNA production by associating with host nuclear protein PINP1 that acts as a regulator of the accumulation of both microRNAs and endogenous small interfering RNAs. The polypeptide is RxLR effector protein PSR1 (Phytophthora sojae (Soybean stem and root rot agent)).